An 86-amino-acid chain; its full sequence is MSLLDYFKSKKKPNTAVTAKERLQIIVAHQRGERDAPDYFPQMKQEIIEVIKKYVHIDPDQVTVQLDQNDDKLSVLELNVTLPEEK.

Belongs to the MinE family.

In terms of biological role, prevents the cell division inhibition by proteins MinC and MinD at internal division sites while permitting inhibition at polar sites. This ensures cell division at the proper site by restricting the formation of a division septum at the midpoint of the long axis of the cell. This is Cell division topological specificity factor from Shewanella sediminis (strain HAW-EB3).